Reading from the N-terminus, the 49-residue chain is Large ribosomal subunit protein bL33 (49 aa).

This sequence belongs to the bacterial ribosomal protein bL33 family.

In Heliobacterium modesticaldum (strain ATCC 51547 / Ice1), this protein is Large ribosomal subunit protein bL33.